Here is a 118-residue protein sequence, read N- to C-terminus: NAD(P)H-quinone oxidoreductase subunit M (118 aa).

The protein belongs to the complex I NdhM subunit family. NDH-1 can be composed of about 15 different subunits; different subcomplexes with different compositions have been identified which probably have different functions.

Its subcellular location is the cellular thylakoid membrane. The enzyme catalyses a plastoquinone + NADH + (n+1) H(+)(in) = a plastoquinol + NAD(+) + n H(+)(out). It carries out the reaction a plastoquinone + NADPH + (n+1) H(+)(in) = a plastoquinol + NADP(+) + n H(+)(out). Functionally, NDH-1 shuttles electrons from an unknown electron donor, via FMN and iron-sulfur (Fe-S) centers, to quinones in the respiratory and/or the photosynthetic chain. The immediate electron acceptor for the enzyme in this species is believed to be plastoquinone. Couples the redox reaction to proton translocation, and thus conserves the redox energy in a proton gradient. Cyanobacterial NDH-1 also plays a role in inorganic carbon-concentration. In Rippkaea orientalis (strain PCC 8801 / RF-1) (Cyanothece sp. (strain PCC 8801)), this protein is NAD(P)H-quinone oxidoreductase subunit M.